Consider the following 66-residue polypeptide: DNA-directed RNA polymerase subunit Rpo10 (66 aa).

Zn(2+) contacts are provided by Cys-7, Cys-10, Cys-44, and Cys-45.

It belongs to the archaeal Rpo10/eukaryotic RPB10 RNA polymerase subunit family. Part of the RNA polymerase complex. It depends on Zn(2+) as a cofactor.

It localises to the cytoplasm. It catalyses the reaction RNA(n) + a ribonucleoside 5'-triphosphate = RNA(n+1) + diphosphate. Its function is as follows. DNA-dependent RNA polymerase (RNAP) catalyzes the transcription of DNA into RNA using the four ribonucleoside triphosphates as substrates. This is DNA-directed RNA polymerase subunit Rpo10 from Pyrobaculum neutrophilum (strain DSM 2338 / JCM 9278 / NBRC 100436 / V24Sta) (Thermoproteus neutrophilus).